The sequence spans 2353 residues: MKQRKGQGSGGSRGRKKRGLSDISPSTSLPPLVEGQLRCFLKLTVNRVIWKIAKPPTCVLVRVRWWGETSDGTLFCPRDALQTEPKAVRTTTRYAIRCGPKQFTSYLTDMAVLVLEVITKLDGLPIGRVQINGLAQLSPTHQINGFFTIVSSTSKKLGELQVSLALEPLSETYDSYHPLPTTDMTENVLLSKQGFRENTEPSSTQFQVPSRPRDIHTIKIDGKELAANSSRSTTPRGKDHVCFAENPDTIKDSSFGLQHSLNSGQSLESVTLKGRAPRKQMSLLNSSEFQPQIRTVAKSHSDSCILSSNNLPTKDLLSALLEQGNKLRNAMVISAMKSSPETSMLLDQVHPPINEDSLRASTQIRAFSRNRFKDHIEDHLLPSTENTFWRHDTKADTRAIQLLLGSAELSQGNFWDGLGSPPDSPSPGSDVYCISELNDPQYDQSLLENLFYTAPKSDTSISDFLSEEDDIVPSKKISQSTALARSSKVLESSDHKLKKRSAGKRNRNLVEQQMLSETPEDAQTMTLSVDRLALLGRTHSVRIIIETMGVPPDSPQMTPGKKSYAGPPPKVTTAKKRTFFVEYHFPVGFSESGLGKTALITEVVRLASSKITDGKVKFQQRFVFPVQFGGPMIEHWWNSNLTFQIYVKKTPQKKPEVIGSVSLSLRAVIQSELLSFSDQLPVQQENGQSPFGPLKVTMELITDNKDFTGINTKLSGNTHYTPLCAPTSPNKALPELNQDMTCTKNPQNLNQIHEETAKKAQNLVLPNRKSPSPVAPHPSTFVATPASHNLVNQTNGTTKESALLLHVLLMVPDGKDFISGESEKQSPCNVYLNCKLFSTEEVTRSVIAWGTTQPVFNFSQVIPVSLSSKYLERLKNNVMVIETWNKVRSPGQDKLLGLVKLPLHQFYMSFKDAKISRLLLDAQYPVVAVDSYMPVIDVFSGHQNGSLRVFLAMGSSNQIMALQRLKNEEGTLPPFSPRPAHFLDQPTAASVAMAEDRGNGLMEHCFEIHIEMVKGLAPLQATVWGEADCYVQYYFPVQHSQSSVLKGPEFLENGITLKPFRTATTLCVPDPIFNSEHHHSLLLPAEVPVQRLLLSAFSAQGLVPGGGVQFEIWCRYYYPNVRDQKVAKGTLPLSRICAMVTTQHREDVGIQTFNLPLTPRIENRKELRNQSSGLLDVGLRYRRSPRTAEGVLAARTVSISVQIIRACGLQAAAKALAEREPALQFSATVGVNASVTTHLSFLPQGEQRRTHPVACSFCPEFSHHVEFTCNLVTQHCSGEACFLAELLEFAEVIFAVYHENTKSASDIISIESCKEYLLGVVKVPTKELLIKRSGITGWYPIILPEDGGLPHGLELMQKIVGGLELSISFTHRGDRERVLEAAEHLGWSFENSLKDFVRMDEGEPATVTISTPRLWLPIHCVLLAGHNHIHKNTYCYLRYKFYDHEAFWTPLKKPKESVNKKQIMVTFKASKRAEVTRGPSLLWYFREERLEIQVWRAYGNDSVERPHQTDSWIGSAYVDLARLGERSARTLTVSGVYPLFGRNASNLSGAALRVHVVLSSLSSHLEPTHELDSMDCSSHSESEQLPRRNDEVQLSPPEVISCHQKSPASTQVPCSSTTAEVRLTQEGPADLDGTFAVSILVERAMHLSLKGSPLTERKVSIPSCCVSFATADESSPVYTQVVENTDSPIWNFQQQSRLSKELLLDPQQTLVFKVWHKGDEERVIGFASVDLSPLLSGFQFVCGWYNITDFSGECQGQIKVAVSPLESLIHFKEERQARRGVETSKSLIPIYSPFSFPASDTYAAFSSHMARQTLDQLAHASSKELDFSSPGRSDTTRSQASRHEEHVQNIRRFHESLHLQGEAPLPCDDKLTTSPLSSQTSILTSLRKNLSELDQIQRYFRQKLTKPFLPLSPQTQTAISQHQESCRDHLGPGASSLDPGSQCILEKSSNLVLQVSSLITDLQTITRDSQAALSSHRARSRSNKATTLPDAQDTEALQERCTMPDEPLVRAPDKGTDSPSPPPLEETSNGGRMLHESLRHAVPITRMQSSEDTEAGPAYSDEDYEEDIIEPRTLNEITTVTDKTSPWSSVISDTSEVISPQPDEVQREGPSCPSPGPFCREELMVKSSFLSSPERAVNPHLPRQGSPSQSLVACECEASKARVGGESASANPQPIPCPTLSGAQQSSTFVGWSSPQTDQNKEPKSEAPAENEAATSELGDSADSFKKLPLNLASQSRRENHKGPPIDSSDIRQRQVTTGSETSTKQSLLLPGPIVVPNFFLPPQQLEASLRMLSLSATLPPAATTDQDKSEATRGALSQRPCRPRPNSLPLNLPEEETLRIARIFSSQYSQKD.

The segment at 1-27 (MKQRKGQGSGGSRGRKKRGLSDISPST) is disordered. Phosphoserine is present on Ser466. Disordered regions lie at residues 488–508 (KVLESSDHKLKKRSAGKRNRN) and 549–568 (GVPPDSPQMTPGKKSYAGPP). The segment covering 496–507 (KLKKRSAGKRNR) has biased composition (basic residues). A C2 1 domain is found at 521–678 (DAQTMTLSVD…IQSELLSFSD (158 aa)). Position 728 is a phosphoserine (Ser728). C2 domains are found at residues 787–919 (SHNL…SRLL), 985–1147 (QPTA…HRED), 1171–1339 (SSGL…TGWY), and 1403–1533 (EPAT…TLTV). The interval 1569–1591 (HELDSMDCSSHSESEQLPRRNDE) is disordered. The region spanning 1617 to 1745 (TTAEVRLTQE…SGFQFVCGWY (129 aa)) is the C2 6 domain. The tract at residues 1822–1846 (SKELDFSSPGRSDTTRSQASRHEEH) is disordered. A compositionally biased stretch (polar residues) spans 1830 to 1839 (PGRSDTTRSQ). Ser1891 carries the phosphoserine modification. Disordered regions lie at residues 1972-2032 (ALSS…NGGR), 2084-2118 (TSPWSSVISDTSEVISPQPDEVQREGPSCPSPGPF), 2130-2269 (LSSP…QSLL), and 2301-2334 (PAATTDQDKSEATRGALSQRPCRPRPNSLPLNLP). A compositionally biased stretch (basic and acidic residues) spans 2007 to 2016 (PLVRAPDKGT). A compositionally biased stretch (polar residues) spans 2084-2098 (TSPWSSVISDTSEVI). Phosphoserine is present on residues Ser2114 and Ser2132. Polar residues predominate over residues 2181–2198 (SGAQQSSTFVGWSSPQTD). Residues 2236–2253 (SRRENHKGPPIDSSDIRQ) are compositionally biased toward basic and acidic residues. Residues 2254–2267 (RQVTTGSETSTKQS) show a composition bias toward polar residues.

In terms of assembly, interacts with IFT88, BBS4 and PCM1. Interacts with OFD1; OFD1 may act as a negative regulator of C2CD3. Associates with the BBSome complex.

The protein resides in the cytoplasm. It is found in the cytoskeleton. The protein localises to the cilium basal body. It localises to the microtubule organizing center. Its subcellular location is the centrosome. The protein resides in the centriole. Component of the centrioles that acts as a positive regulator of centriole elongation. Promotes assembly of centriolar distal appendage, a structure at the distal end of the mother centriole that acts as an anchor of the cilium, and is required for recruitment of centriolar distal appendages proteins CEP83, SCLT1, CEP89, FBF1 and CEP164. Not required for centriolar satellite integrity or RAB8 activation. Required for primary cilium formation. Required for sonic hedgehog/SHH signaling and for proteolytic processing of GLI3. This chain is C2 domain-containing protein 3 (C2CD3), found in Homo sapiens (Human).